A 415-amino-acid chain; its full sequence is NPL4-like protein (415 aa).

One can recognise an MPN domain in the interval 130 to 279 (AASFDRDSAN…FEAFQMSEIC (150 aa)).

This sequence belongs to the NPL4 family.

The protein localises to the endoplasmic reticulum. Its pathway is protein degradation; proteasomal ubiquitin-dependent pathway. May be part of a complex that binds ubiquitinated proteins and that is necessary for the export of misfolded proteins from the ER to the cytoplasm, where they are degraded by the proteasome. This Oryza sativa subsp. japonica (Rice) protein is NPL4-like protein.